The chain runs to 77 residues: Cell division topological specificity factor (77 aa).

Belongs to the MinE family.

Its function is as follows. Prevents the cell division inhibition by proteins MinC and MinD at internal division sites while permitting inhibition at polar sites. This ensures cell division at the proper site by restricting the formation of a division septum at the midpoint of the long axis of the cell. The chain is Cell division topological specificity factor from Helicobacter pylori (strain HPAG1).